Here is a 1093-residue protein sequence, read N- to C-terminus: Probable cellulose synthase A catalytic subunit 3 [UDP-forming] (1093 aa).

At 1 to 280 (MEASAGLVAG…PSSQINPYRM (280 aa)) the chain is on the cytoplasmic side. Residues Cys-39, Cys-42, Cys-58, Cys-61, Cys-66, Cys-69, Cys-81, and Cys-84 each contribute to the Zn(2+) site. The RING-type; degenerate zinc-finger motif lies at 39–85 (CQICGDDVGLNPDGEPFVACNECAFPVCRDCYEYERREGTQNCPQCK). The segment covering 233–246 (LHQMRNDGGGKDWD) has biased composition (basic and acidic residues). The disordered stretch occupies residues 233–257 (LHQMRNDGGGKDWDGDGDDGDLPLM). The helical transmembrane segment at 281-301 (VIIIRLVVLGFFFHYRVMHPV) threads the bilayer. At 302–303 (PD) the chain is on the extracellular side. The helical transmembrane segment at 304 to 324 (AFALWLISVICEIWFAMSWIL) threads the bilayer. Topologically, residues 325-869 (DQFPKWFPIE…CLERFSYINS (545 aa)) are cytoplasmic. Residues Ser-363, Lys-369, Glu-370, and Asp-399 each contribute to the UDP-alpha-D-glucose site. The active site involves Asp-399. Residues 453–480 (VRERRAMKREYEEFKVRINALVAKAQKV) adopt a coiled-coil conformation. Lys-540 lines the UDP-alpha-D-glucose pocket. Mn(2+)-binding residues include Lys-541 and Asp-565. Residue Asp-793 is part of the active site. Residues 870 to 890 (IVYPFTSIPLLAYCTLPAICL) traverse the membrane as a helical segment. Over 891 to 902 (LTGKFITPELTN) the chain is Extracellular. Residues 903-923 (VASLWFMSLFICIFATGILEM) form a helical membrane-spanning segment. The Cytoplasmic portion of the chain corresponds to 924-939 (RWSGVGIDDWWRNEQF). The helical transmembrane segment at 940-960 (WVIGGVSSHLFALFQGLLKVI) threads the bilayer. The Extracellular portion of the chain corresponds to 961-988 (AGIDTSFTVTSKGGDDEEFSELYTFKWT). The helical transmembrane segment at 989 to 1009 (TLLIPPTTLLLLNFIGVVAGV) threads the bilayer. The Cytoplasmic portion of the chain corresponds to 1010–1020 (SNAINNGYESW). The helical transmembrane segment at 1021–1041 (GPLFGKLFFAFWVIVHLYPFL) threads the bilayer. The Extracellular portion of the chain corresponds to 1042 to 1050 (KGLVGRQNR). A helical membrane pass occupies residues 1051-1071 (TPTIVIVWSILLASIFSLLWV). Over 1072–1093 (RIDPFLAKNDGPLLEECGLDCN) the chain is Cytoplasmic.

This sequence belongs to the glycosyltransferase 2 family. Plant cellulose synthase subfamily. Requires Mn(2+) as cofactor. The cofactor is Zn(2+).

Its subcellular location is the cell membrane. It catalyses the reaction [(1-&gt;4)-beta-D-glucosyl](n) + UDP-alpha-D-glucose = [(1-&gt;4)-beta-D-glucosyl](n+1) + UDP + H(+). Its pathway is glycan metabolism; plant cellulose biosynthesis. Probable catalytic subunit of cellulose synthase terminal complexes ('rosettes'), required for beta-1,4-glucan microfibril crystallization, a major mechanism of the cell wall formation. The polypeptide is Probable cellulose synthase A catalytic subunit 3 [UDP-forming] (CESA3) (Oryza sativa subsp. japonica (Rice)).